The chain runs to 283 residues: Arylamine N-acetyltransferase (283 aa).

Cys70 serves as the catalytic Acyl-thioester intermediate. Residues His110 and Asp127 contribute to the active site.

The protein belongs to the arylamine N-acetyltransferase family. As to quaternary structure, homodimer and homotetramer.

The enzyme catalyses an arylamine + acetyl-CoA = an N-acetylarylamine + CoA. Its function is as follows. Catalyzes the transfer of the acetyl group from acetyl coenzyme A to the free amino group of arylamines and hydrazines. Is able to utilize not only acetyl-CoA, but also n-propionyl-CoA and acetoacetyl-CoA as acyl donors, although at a lower rate. As acetyl-CoA and propionyl-CoA are products of cholesterol catabolism and the nat gene is likely present in the same operon than genes involved in cholesterol degradation, this enzyme could have a role in the utilization and regulation of these CoA species. The polypeptide is Arylamine N-acetyltransferase (nat) (Mycobacterium bovis (strain ATCC BAA-935 / AF2122/97)).